Here is a 2258-residue protein sequence, read N- to C-terminus: Probable serine/threonine-protein kinase ifkA (2258 aa).

Disordered regions lie at residues 43–108 (RVNS…HQMG) and 189–308 (EMNN…KEND). Over residues 45 to 57 (NSSDDINNNNNNN) the composition is skewed to low complexity. Over residues 58-100 (NDDDDDNDDYDDSDDENSDSDYDDYDDSDDENSDDEFYSDDED) the composition is skewed to acidic residues. The segment covering 191-301 (NNLTNSNNSN…NKELIDNNNN (111 aa)) has biased composition (low complexity). The stretch at 273-309 (NNNNNISNNKINKINNNNNNKELIDNNNNNKDKENDL) forms a coiled coil. Residues 319 to 691 (WKKGSCIERK…AGILLKHPFL (373 aa)) enclose the Protein kinase 1 domain. ATP is bound by residues 325-333 (IERKSNYSV) and Lys348. The segment at 358 to 398 (SSSSLTSLSNSNNNNSNNNNNNNNNNNNNNNNNNNNNNNNN) is disordered. A compositionally biased stretch (low complexity) spans 359–398 (SSSLTSLSNSNNNNSNNNNNNNNNNNNNNNNNNNNNNNNN). Asp498 serves as the catalytic Proton acceptor. 2 disordered regions span residues 741 to 768 (KSQT…NGSN) and 782 to 870 (PLAT…MTPL). Over residues 746–768 (NNNNDNNNLASSNELLSSSNGSN) the composition is skewed to low complexity. The span at 782–791 (PLATSSSLDN) shows a compositional bias: polar residues. Pro residues predominate over residues 793 to 805 (TPPPSRPISPKPS). Positions 841-870 (PQQNFNTPPTTTTTTTTPTATPTTPTMTPL) are enriched in low complexity. The Protein kinase 2 domain maps to 894-1482 (FEEIEMIGKG…TKQLLESGLL (589 aa)). ATP contacts are provided by residues 900–908 (IGKGGFGVV) and Lys923. A compositionally biased stretch (low complexity) spans 1053-1094 (TLSSSNTSSSSSLLSNNKSKILNTSKSTSTNTSTSTSTSNTN). The tract at residues 1053 to 1259 (TLSSSNTSSS…SSSRKKPPKE (207 aa)) is disordered. The segment covering 1095–1106 (KNKKISKKKKSK) has biased composition (basic residues). The segment covering 1156–1185 (NNNNNNDNNNNYHSDNESDSFSGSISMSDG) has biased composition (low complexity). Positions 1206–1233 (DENENDDDDEEDDDDEYDEEDDDYETFD) are enriched in acidic residues. A compositionally biased stretch (low complexity) spans 1242–1251 (SNNSKLSTSS). Asp1313 functions as the Proton acceptor in the catalytic mechanism. Disordered regions lie at residues 1343-1370 (KSDD…TAQQ) and 2048-2104 (GSGG…QQTS). Residues 1347-1368 (LNSSTSNTANNINLSSSTNSTA) are compositionally biased toward low complexity. Gly residues predominate over residues 2048–2072 (GSGGSGGSGGGSSMSSGGGGGGNSN). Over residues 2085-2099 (SNQSTSSSGNSNNSN) the composition is skewed to low complexity.

Belongs to the protein kinase superfamily. Ser/Thr protein kinase family.

The enzyme catalyses L-seryl-[protein] + ATP = O-phospho-L-seryl-[protein] + ADP + H(+). It catalyses the reaction L-threonyl-[protein] + ATP = O-phospho-L-threonyl-[protein] + ADP + H(+). Phosphorylates eIF2-alpha, from 1 to 7 hours after the onset of development or during the preaggregation state, resulting in a shift from polysomes to free ribosomes for bulk mRNA. This Dictyostelium discoideum (Social amoeba) protein is Probable serine/threonine-protein kinase ifkA (ifkA).